The following is a 522-amino-acid chain: Transcription factor SPT20 homolog (522 aa).

S284 is modified (phosphoserine). Disordered regions lie at residues D361–N380 and P408–S522. Low complexity predominate over residues S412–S425. Positions T433–V442 are enriched in polar residues. The span at S458–N467 shows a compositional bias: low complexity. The segment covering P481–I492 has biased composition (pro residues). Phosphothreonine is present on T482. Residues L506 to S522 show a composition bias toward low complexity. 2 positions are modified to phosphoserine: S507 and S512.

It belongs to the SPT20 family. Interacts with ATG9A. Interacts with MAPK14.

Required for MAP kinase p38 (MAPK11, MAPK12, MAPK13 and/or MAPK14) activation during gastrulation. Required for down-regulation of E-cadherin during gastrulation by regulating E-cadherin protein level downstream from NCK-interacting kinase (NIK) and independently of the regulation of transcription by FGF signaling and Snail. Required for starvation-induced ATG9A trafficking during autophagy. The sequence is that of Transcription factor SPT20 homolog (SUPT20H) from Pongo abelii (Sumatran orangutan).